A 446-amino-acid chain; its full sequence is Nuclear distribution protein nudF (446 aa).

A LisH domain is found at 9–41 (QAEELHKSMVAYLSSIKASQSSNTLREELGIGD). Residues 60–86 (TGIARLQRKILDLESKITSLQAELDSV) are a coiled coil. WD repeat units lie at residues 113–154 (SHRD…RTLK), 156–196 (HMRG…ANIR), 200–240 (GHDH…CVRT), 243–282 (SNSI…PRAA), 285–345 (GHDN…IKTL), 347–386 (GHDN…RLVK), 391–430 (AHGH…PAFQ), and 432–446 (VIAT…RVFK).

Belongs to the WD repeat LIS1/nudF family. As to quaternary structure, self-associates. Interacts with nudE and dynein.

The protein localises to the cytoplasm. Its subcellular location is the cytoskeleton. The protein resides in the spindle pole. Its function is as follows. Positively regulates the activity of the minus-end directed microtubule motor protein dynein. May enhance dynein-mediated microtubule sliding by targeting dynein to the microtubule plus end. Required for nuclear migration during vegetative growth as well as development. Required for retrograde early endosome (EE) transport from the hyphal tip. Required for localization of dynein to the mitotic spindle poles. Recruits additional proteins to the dynein complex at SPBs. The chain is Nuclear distribution protein nudF from Aspergillus terreus (strain NIH 2624 / FGSC A1156).